We begin with the raw amino-acid sequence, 86 residues long: Exopolysaccharide production repressor protein (86 aa).

Residues 18–38 (FAVTLAASVFLQVVYFLSLLF) traverse the membrane as a helical segment. Positions 44–86 (TRESDRSIHSGTRQADQPQKRDRDKTEQSNVPKLDPRRKRRTP) are disordered. Basic and acidic residues predominate over residues 61 to 70 (PQKRDRDKTE).

It is found in the cell membrane. It participates in glycan metabolism; exopolysaccharide biosynthesis. In terms of biological role, inhibition of exopolysaccharide synthesis (EPS) and nodulation ability (NOD). The sequence is that of Exopolysaccharide production repressor protein (exoX) from Rhizobium leguminosarum bv. phaseoli.